Here is a 495-residue protein sequence, read N- to C-terminus: Hydroxyneurosporene desaturase (495 aa).

The protein belongs to the carotenoid/retinoid oxidoreductase family.

It catalyses the reaction rhodopin + A = (3E)-3,4-didehydrorhodopin + AH2. It participates in carotenoid biosynthesis; spheroidene biosynthesis. Functionally, catalyzes the introduction of C-3,4 double bonds into 1-hydroxyneurosporene (1-HO-Neu) to yield demethylspheroidene (DMS). It prefer the acyclic carotenoids such as 1-hydroxylycopene, and 1-hydroxy-gamma-carotene, whereas 1-hydroxy-3,4-didehydrolycopene and 1,1-dihydroxylycopene are much less effective. The chain is Hydroxyneurosporene desaturase (crtD) from Cereibacter sphaeroides (strain ATCC 17023 / DSM 158 / JCM 6121 / CCUG 31486 / LMG 2827 / NBRC 12203 / NCIMB 8253 / ATH 2.4.1.) (Rhodobacter sphaeroides).